Here is an 82-residue protein sequence, read N- to C-terminus: ATP synthase subunit c, chloroplastic (82 aa).

Transmembrane regions (helical) follow at residues 7 to 27 (AASV…PGIG) and 57 to 77 (LAFM…LLFA).

The protein belongs to the ATPase C chain family. F-type ATPases have 2 components, F(1) - the catalytic core - and F(0) - the membrane proton channel. F(1) has five subunits: alpha(3), beta(3), gamma(1), delta(1), epsilon(1). F(0) has four main subunits: a(1), b(1), b'(1) and c(10-14). The alpha and beta chains form an alternating ring which encloses part of the gamma chain. F(1) is attached to F(0) by a central stalk formed by the gamma and epsilon chains, while a peripheral stalk is formed by the delta, b and b' chains.

The protein localises to the plastid. It localises to the chloroplast thylakoid membrane. Functionally, f(1)F(0) ATP synthase produces ATP from ADP in the presence of a proton or sodium gradient. F-type ATPases consist of two structural domains, F(1) containing the extramembraneous catalytic core and F(0) containing the membrane proton channel, linked together by a central stalk and a peripheral stalk. During catalysis, ATP synthesis in the catalytic domain of F(1) is coupled via a rotary mechanism of the central stalk subunits to proton translocation. In terms of biological role, key component of the F(0) channel; it plays a direct role in translocation across the membrane. A homomeric c-ring of between 10-14 subunits forms the central stalk rotor element with the F(1) delta and epsilon subunits. This Porphyra purpurea (Red seaweed) protein is ATP synthase subunit c, chloroplastic.